A 388-amino-acid chain; its full sequence is Flavin-dependent monooxygenase (388 aa).

Residues 26 to 27 (PV) and 45 to 48 (YERD) contribute to the FAD site. An NADPH-binding site is contributed by Arg-54. FAD-binding residues include Asp-61, Arg-117, and Leu-139. Residues Gln-192 and Arg-213 each coordinate substrate. FAD is bound by residues Asp-311 and 321 to 324 (GQGV).

Belongs to the aromatic-ring hydroxylase family. TetX subfamily. In terms of assembly, monomer. The cofactor is FAD.

The protein localises to the cytoplasm. It catalyses the reaction a tetracycline + NADPH + O2 + H(+) = an 11a-hydroxytetracycline + NADP(+) + H2O. It carries out the reaction tetracycline + NADPH + O2 + H(+) = 11a-hydroxytetracycline + NADP(+) + H2O. The enzyme catalyses tigecycline + NADPH + O2 + H(+) = 11a-hydroxytigecycline + NADP(+) + H2O. The catalysed reaction is oxytetracycline + NADPH + O2 + H(+) = 11a-hydroxy-oxytetracycline + NADP(+) + H2O. Anhydrotetracycline, a poor substrate, prevents tetracycline degradation in vitro. Functionally, an FAD-requiring monooxygenase active on tetracycline antibiotic derivatives, which leads to their inactivation. Hydroxylates carbon 11a of oxytetracycline and tigecycline. Acts on many tetracycline analogs (chlorotetracycline, demeclocycline, doxycycline, minocycline, oxytetracyclinee), probably by monooxygenization. Tigecycline, a new generation tetracycline antibiotic, is rendered less effective against E.coli by this monooxygenation, is much weaker at inhibiting translation in vitro and binds Mg(2+) considerably less well. Expression in E.coli BW25113 reduces its growth rate about 5%. The reaction probably proceeds by FAD reduction by NADPH and, second, hydroxylation of antibiotic in a ping-pong mechanism. Degrades chlortetracycline, probably by monooxygenation. Slowly oxidizes anhydrotetracycline, the final substrate in tetracycline biosynthesis. The protein is Flavin-dependent monooxygenase of Bacteroides thetaiotaomicron.